Consider the following 217-residue polypeptide: Protein-L-isoaspartate O-methyltransferase (217 aa).

Ser59 is an active-site residue.

This sequence belongs to the methyltransferase superfamily. L-isoaspartyl/D-aspartyl protein methyltransferase family.

Its subcellular location is the cytoplasm. It catalyses the reaction [protein]-L-isoaspartate + S-adenosyl-L-methionine = [protein]-L-isoaspartate alpha-methyl ester + S-adenosyl-L-homocysteine. Functionally, catalyzes the methyl esterification of L-isoaspartyl residues in peptides and proteins that result from spontaneous decomposition of normal L-aspartyl and L-asparaginyl residues. It plays a role in the repair and/or degradation of damaged proteins. This Methanothermobacter thermautotrophicus (strain ATCC 29096 / DSM 1053 / JCM 10044 / NBRC 100330 / Delta H) (Methanobacterium thermoautotrophicum) protein is Protein-L-isoaspartate O-methyltransferase (pcm).